Here is a 137-residue protein sequence, read N- to C-terminus: NADH-quinone oxidoreductase subunit A (137 aa).

Helical transmembrane passes span 12-32 (WGFAIFLLGVVGLCAFMLGVS), 66-86 (FYLVAMLFVIFDIEALFLFAW), and 96-116 (TGFVEALVFIAILLAGLVYLF).

The protein belongs to the complex I subunit 3 family. NDH-1 is composed of 13 different subunits. Subunits NuoA, H, J, K, L, M, N constitute the membrane sector of the complex.

Its subcellular location is the cell inner membrane. It catalyses the reaction a quinone + NADH + 5 H(+)(in) = a quinol + NAD(+) + 4 H(+)(out). NDH-1 shuttles electrons from NADH, via FMN and iron-sulfur (Fe-S) centers, to quinones in the respiratory chain. The immediate electron acceptor for the enzyme in this species is believed to be ubiquinone. Couples the redox reaction to proton translocation (for every two electrons transferred, four hydrogen ions are translocated across the cytoplasmic membrane), and thus conserves the redox energy in a proton gradient. This is NADH-quinone oxidoreductase subunit A from Pseudomonas fluorescens (strain Pf0-1).